The sequence spans 73 residues: Defensin-like protein 10 (73 aa).

An N-terminal signal peptide occupies residues 1-28 (MKLSLRLISALLMSVMLLFATGMGPVEA). 4 disulfide bridges follow: Cys-31/Cys-73, Cys-42/Cys-62, Cys-48/Cys-67, and Cys-52/Cys-69.

This sequence belongs to the DEFL family.

It is found in the secreted. Confers broad-spectrum resistance to pathogens. This chain is Defensin-like protein 10 (PDF2.6), found in Arabidopsis thaliana (Mouse-ear cress).